A 213-amino-acid polypeptide reads, in one-letter code: FMN-dependent NADH:quinone oxidoreductase (213 aa).

17 to 19 is an FMN binding site; that stretch reads SSS.

It belongs to the azoreductase type 1 family. In terms of assembly, homodimer. Requires FMN as cofactor.

It catalyses the reaction 2 a quinone + NADH + H(+) = 2 a 1,4-benzosemiquinone + NAD(+). The enzyme catalyses N,N-dimethyl-1,4-phenylenediamine + anthranilate + 2 NAD(+) = 2-(4-dimethylaminophenyl)diazenylbenzoate + 2 NADH + 2 H(+). Quinone reductase that provides resistance to thiol-specific stress caused by electrophilic quinones. Its function is as follows. Also exhibits azoreductase activity. Catalyzes the reductive cleavage of the azo bond in aromatic azo compounds to the corresponding amines. The polypeptide is FMN-dependent NADH:quinone oxidoreductase (Ruminiclostridium cellulolyticum (strain ATCC 35319 / DSM 5812 / JCM 6584 / H10) (Clostridium cellulolyticum)).